We begin with the raw amino-acid sequence, 453 residues long: Bifunctional protein GlmU (453 aa).

Residues 1–226 (MVAVAILAAG…YLEITGINDR (226 aa)) are pyrophosphorylase. Residues 7-10 (LAAG), Lys21, Gln73, and 78-79 (GT) each bind UDP-N-acetyl-alpha-D-glucosamine. Asp103 provides a ligand contact to Mg(2+). Gly140, Glu155, Asn170, and Asn224 together coordinate UDP-N-acetyl-alpha-D-glucosamine. Position 224 (Asn224) interacts with Mg(2+). The linker stretch occupies residues 227–247 (KQLAMANGILQNRVKDHWMAQ). Residues 248–453 (GVTLIDPDSI…EWKKTIESKK (206 aa)) form an N-acetyltransferase region. UDP-N-acetyl-alpha-D-glucosamine contacts are provided by Arg329 and Lys347. His359 serves as the catalytic Proton acceptor. Residues Tyr362 and Asn373 each coordinate UDP-N-acetyl-alpha-D-glucosamine. Acetyl-CoA-binding positions include Ala376, 382–383 (NY), Ala419, and Arg436.

In the N-terminal section; belongs to the N-acetylglucosamine-1-phosphate uridyltransferase family. This sequence in the C-terminal section; belongs to the transferase hexapeptide repeat family. As to quaternary structure, homotrimer. Requires Mg(2+) as cofactor.

Its subcellular location is the cytoplasm. The catalysed reaction is alpha-D-glucosamine 1-phosphate + acetyl-CoA = N-acetyl-alpha-D-glucosamine 1-phosphate + CoA + H(+). The enzyme catalyses N-acetyl-alpha-D-glucosamine 1-phosphate + UTP + H(+) = UDP-N-acetyl-alpha-D-glucosamine + diphosphate. It functions in the pathway nucleotide-sugar biosynthesis; UDP-N-acetyl-alpha-D-glucosamine biosynthesis; N-acetyl-alpha-D-glucosamine 1-phosphate from alpha-D-glucosamine 6-phosphate (route II): step 2/2. The protein operates within nucleotide-sugar biosynthesis; UDP-N-acetyl-alpha-D-glucosamine biosynthesis; UDP-N-acetyl-alpha-D-glucosamine from N-acetyl-alpha-D-glucosamine 1-phosphate: step 1/1. Its pathway is bacterial outer membrane biogenesis; LPS lipid A biosynthesis. In terms of biological role, catalyzes the last two sequential reactions in the de novo biosynthetic pathway for UDP-N-acetylglucosamine (UDP-GlcNAc). The C-terminal domain catalyzes the transfer of acetyl group from acetyl coenzyme A to glucosamine-1-phosphate (GlcN-1-P) to produce N-acetylglucosamine-1-phosphate (GlcNAc-1-P), which is converted into UDP-GlcNAc by the transfer of uridine 5-monophosphate (from uridine 5-triphosphate), a reaction catalyzed by the N-terminal domain. The protein is Bifunctional protein GlmU of Rippkaea orientalis (strain PCC 8801 / RF-1) (Cyanothece sp. (strain PCC 8801)).